The primary structure comprises 484 residues: Glutamyl-tRNA(Gln) amidotransferase subunit A (484 aa).

Residues Lys-76 and Ser-151 each act as charge relay system in the active site. Ser-175 (acyl-ester intermediate) is an active-site residue.

It belongs to the amidase family. GatA subfamily. In terms of assembly, heterotrimer of A, B and C subunits.

The enzyme catalyses L-glutamyl-tRNA(Gln) + L-glutamine + ATP + H2O = L-glutaminyl-tRNA(Gln) + L-glutamate + ADP + phosphate + H(+). Allows the formation of correctly charged Gln-tRNA(Gln) through the transamidation of misacylated Glu-tRNA(Gln) in organisms which lack glutaminyl-tRNA synthetase. The reaction takes place in the presence of glutamine and ATP through an activated gamma-phospho-Glu-tRNA(Gln). The polypeptide is Glutamyl-tRNA(Gln) amidotransferase subunit A (Hahella chejuensis (strain KCTC 2396)).